The sequence spans 621 residues: Methionine--tRNA ligase (621 aa).

Residues 11 to 21 (PYANGPRHIGH) carry the 'HIGH' region motif. Positions 143, 146, 156, and 159 each coordinate Zn(2+). The short motif at 347–351 (KFSSS) is the 'KMSKS' region element. ATP is bound at residue S350.

The protein belongs to the class-I aminoacyl-tRNA synthetase family. MetG type 1 subfamily. Monomer. Zn(2+) serves as cofactor.

Its subcellular location is the cytoplasm. It catalyses the reaction tRNA(Met) + L-methionine + ATP = L-methionyl-tRNA(Met) + AMP + diphosphate. In terms of biological role, is required not only for elongation of protein synthesis but also for the initiation of all mRNA translation through initiator tRNA(fMet) aminoacylation. The chain is Methionine--tRNA ligase from Bifidobacterium longum subsp. infantis (strain ATCC 15697 / DSM 20088 / JCM 1222 / NCTC 11817 / S12).